A 493-amino-acid polypeptide reads, in one-letter code: Ribosomal protein uS12 methylthiotransferase RimO (493 aa).

Residues 5–121 (RTVALVTLGC…ISDRLQTILN (117 aa)) form the MTTase N-terminal domain. Residues Cys-14, Cys-50, Cys-84, Cys-198, Cys-202, and Cys-205 each contribute to the [4Fe-4S] cluster site. A Radical SAM core domain is found at 184-415 (LGTSPVASVK…QLAEELTSQR (232 aa)). In terms of domain architecture, TRAM spans 417–487 (EERVGETLQV…GVDLVAEHHE (71 aa)).

This sequence belongs to the methylthiotransferase family. RimO subfamily. The cofactor is [4Fe-4S] cluster.

It is found in the cytoplasm. It carries out the reaction L-aspartate(89)-[ribosomal protein uS12]-hydrogen + (sulfur carrier)-SH + AH2 + 2 S-adenosyl-L-methionine = 3-methylsulfanyl-L-aspartate(89)-[ribosomal protein uS12]-hydrogen + (sulfur carrier)-H + 5'-deoxyadenosine + L-methionine + A + S-adenosyl-L-homocysteine + 2 H(+). Functionally, catalyzes the methylthiolation of an aspartic acid residue of ribosomal protein uS12. This is Ribosomal protein uS12 methylthiotransferase RimO from Streptomyces griseus subsp. griseus (strain JCM 4626 / CBS 651.72 / NBRC 13350 / KCC S-0626 / ISP 5235).